Here is a 425-residue protein sequence, read N- to C-terminus: MIDIKVLRENPELMKENIVLRNLDPNKYDVDYILELDAKRRSLQKELDTLKAQRNKISQEIGKRKGEEREELIKKAKTLKEKIEELEKEYEKIEKELYLKLWQLPNFLSPKAPKGKDEKDNIEIKRWGNIKTFTFTPKDHLDLALLNDLVDFERGSKVTGSNFYYLKNEAVLLEFALFRLVIDTLLPEGFKLFITPDLARMEIIDGIGFQPRGPEAQIYRVEDTDLGLIATAEITLGGYHKDEILDELDLPLKYLGFSHCFRTEAGAYGRYNRGLYRVHQFSKAEIFIICRPEDSEEMHEYILSLEEKIFQKLEIPYRVVDICSGDLGAPAARKFDIEAWMPGRGDFGEVTSCSNCTDYQARRLNIRFRRVTGEVEYVHMLNGTAIAISRALIAILENYQQEDGSILIPKVLQPYIGISEIKPKK.

Thr-231–Glu-233 lines the L-serine pocket. Residues Arg-262–Glu-264 and Val-278 each bind ATP. L-serine is bound at residue Glu-285. Residue Glu-349–Ser-352 coordinates ATP. L-serine is bound at residue Thr-384.

The protein belongs to the class-II aminoacyl-tRNA synthetase family. Type-1 seryl-tRNA synthetase subfamily. In terms of assembly, homodimer. The tRNA molecule binds across the dimer.

The protein resides in the cytoplasm. It carries out the reaction tRNA(Ser) + L-serine + ATP = L-seryl-tRNA(Ser) + AMP + diphosphate + H(+). The catalysed reaction is tRNA(Sec) + L-serine + ATP = L-seryl-tRNA(Sec) + AMP + diphosphate + H(+). Its pathway is aminoacyl-tRNA biosynthesis; selenocysteinyl-tRNA(Sec) biosynthesis; L-seryl-tRNA(Sec) from L-serine and tRNA(Sec): step 1/1. Functionally, catalyzes the attachment of serine to tRNA(Ser). Is also able to aminoacylate tRNA(Sec) with serine, to form the misacylated tRNA L-seryl-tRNA(Sec), which will be further converted into selenocysteinyl-tRNA(Sec). This chain is Serine--tRNA ligase, found in Dictyoglomus thermophilum (strain ATCC 35947 / DSM 3960 / H-6-12).